The following is a 938-amino-acid chain: Isoleucine--tRNA ligase (938 aa).

The 'HIGH' region signature appears at 58 to 68 (PYANGSIHIGH). K183 bears the N6-acetyllysine mark. Position 561 (E561) interacts with L-isoleucyl-5'-AMP. A 'KMSKS' region motif is present at residues 602 to 606 (KMSKS). K605 is a binding site for ATP. Residues C901, C904, C921, and C924 each contribute to the Zn(2+) site.

It belongs to the class-I aminoacyl-tRNA synthetase family. IleS type 1 subfamily. In terms of assembly, monomer. Zn(2+) serves as cofactor.

It localises to the cytoplasm. The catalysed reaction is tRNA(Ile) + L-isoleucine + ATP = L-isoleucyl-tRNA(Ile) + AMP + diphosphate. Its function is as follows. Catalyzes the attachment of isoleucine to tRNA(Ile). As IleRS can inadvertently accommodate and process structurally similar amino acids such as valine, to avoid such errors it has two additional distinct tRNA(Ile)-dependent editing activities. One activity is designated as 'pretransfer' editing and involves the hydrolysis of activated Val-AMP. The other activity is designated 'posttransfer' editing and involves deacylation of mischarged Val-tRNA(Ile). The sequence is that of Isoleucine--tRNA ligase from Escherichia coli O9:H4 (strain HS).